Here is a 234-residue protein sequence, read N- to C-terminus: uncharacterized protein (234 aa).

The disordered stretch occupies residues 212 to 234 (GKHLKLDSNTTENKTTKQNETGG). Positions 220–234 (NTTENKTTKQNETGG) are enriched in low complexity.

This is an uncharacterized protein from Methanothermobacter thermautotrophicus (Methanobacterium thermoformicicum).